The sequence spans 241 residues: Ubiquinone biosynthesis O-methyltransferase (241 aa).

Positions 44, 63, 84, and 128 each coordinate S-adenosyl-L-methionine.

It belongs to the methyltransferase superfamily. UbiG/COQ3 family.

The enzyme catalyses a 3-demethylubiquinol + S-adenosyl-L-methionine = a ubiquinol + S-adenosyl-L-homocysteine + H(+). It carries out the reaction a 3-(all-trans-polyprenyl)benzene-1,2-diol + S-adenosyl-L-methionine = a 2-methoxy-6-(all-trans-polyprenyl)phenol + S-adenosyl-L-homocysteine + H(+). The protein operates within cofactor biosynthesis; ubiquinone biosynthesis. Functionally, O-methyltransferase that catalyzes the 2 O-methylation steps in the ubiquinone biosynthetic pathway. In Hydrogenovibrio crunogenus (strain DSM 25203 / XCL-2) (Thiomicrospira crunogena), this protein is Ubiquinone biosynthesis O-methyltransferase.